The following is an 802-amino-acid chain: MGHPPLEFSDCYLDSPDFRERLKCYEQELERTNKFIKDVIKDGSALISAMRSYSSAVQKFSQTLQSFQFDFIGDTLTDDEINIAESFKEFAELLNEVENERMMMVQNASDLLIKPLETFRKEQIGFTKERKKKFEKDGERFYSLLDRHLHLSSKKKESQLLEADLQVDKERHNFFESSLDYVYQIQEVQESKKFNIVEPVLAFLHSLFISNSLTVELTQDFLPYKQQLQLSLQNTRNHFSSTREEMEELKKRMKEAPQTCKLPGQPTIEGYLYTQEKWALGISWVKYYCRYEKETRTLTMTPTEQKPGAKQGPVDLTLKYCVRRKTESIDKRFCFDIEANERTGTITLQAPSEANRRLWMEAMDGKEPIYHSPITKQEEMELNEVGFKFVRKCINFIETKGIKTEGLYRTVGSNIQVQKLLNAFFDPKCPGDVDFYNSDWDIKTITSSLKFYLRNLSEPVMTYKLHKELVSAAKSDNLDYRLGAIHSLVYKLPEKNREMLELLIKHLVNVCEHSKENLMTPSNMGVIFGPTLMRAQEDTVAAMMNIKFQNIVVEILIEHFGKIYLGPPEDSQVPPVPPPRVTARRHKPITISKRLLREKAVFYTPSLDDVEDEIHHPTPNGTIASNLDPPKQLQHLKLPMQKSGEMDPGRKSPSRPVSDCQTEPCLEADMGKLVYRLQDGGTKAIPKASNGPVPGSGHTKTSSFHIKRPAPRPIVHHKEGDTDCFSKVRPPGEKQTIIRPPVRPPDPPCRSSTSQKPESKPETVSSNAEEIPSSVVASRTRFFETASRKTGSSQGKLPGDES.

Positions 265–368 (QPTIEGYLYT…WMEAMDGKEP (104 aa)) constitute a PH domain. The Rho-GAP domain occupies 380-564 (MELNEVGFKF…ILIEHFGKIY (185 aa)). 2 disordered regions span residues 641-663 (QKSGEMDPGRKSPSRPVSDCQTE) and 682-802 (TKAI…GDES). Residues 716-732 (HHKEGDTDCFSKVRPPG) show a composition bias toward basic and acidic residues. The span at 751–768 (SSTSQKPESKPETVSSNA) shows a compositional bias: polar residues.

Interacts with HOMER1. Interacts with AMPA receptor complexes. Interacts with SH3GL2 (endophilin-A1). Interacts (via C-terminus) with NR1D1. As to expression, high expression in brain, particularly in the cerebellum, hippocampus, thalamus, frontal lobes, sensory cortex. Found in the myelin sheaths of peripheral nerves, chromaffin cells within the adrenal medulla, and in extra-adrenal chromaffin cells associated with celiac ganglia.

The protein resides in the postsynapse. It is found in the presynapse. Its subcellular location is the cell projection. The protein localises to the axon. It localises to the dendritic spine. The protein resides in the dendrite. It is found in the cytoplasm. In terms of biological role, stimulates GTP hydrolysis of members of the Rho family. Its action on RHOA activity and signaling is implicated in growth and stabilization of dendritic spines, and therefore in synaptic function, in hippocampal neurons. Critical for the stabilization of AMPA receptors at postsynaptic sites. Critical for the regulation of synaptic vesicle endocytosis at pre-synaptic terminals. Required for the localization of NR1D1 to dendrites, can suppress its repressor activity and protect it from proteasomal degradation. The chain is Oligophrenin-1 (Ophn1) from Rattus norvegicus (Rat).